Consider the following 70-residue polypeptide: DNA-directed RNA polymerase subunit epsilon (70 aa).

The protein belongs to the RNA polymerase subunit epsilon family. As to quaternary structure, RNAP is composed of a core of 2 alpha, a beta and a beta' subunit. The core is associated with a delta subunit, and at least one of epsilon or omega. When a sigma factor is associated with the core the holoenzyme is formed, which can initiate transcription.

The catalysed reaction is RNA(n) + a ribonucleoside 5'-triphosphate = RNA(n+1) + diphosphate. Functionally, a non-essential component of RNA polymerase (RNAP). The polypeptide is DNA-directed RNA polymerase subunit epsilon (Limosilactobacillus reuteri (strain DSM 20016) (Lactobacillus reuteri)).